The primary structure comprises 391 residues: Casein kinase II subunit alpha (391 aa).

The interaction with beta subunit stretch occupies residues Gln36 to Leu41. One can recognise a Protein kinase domain in the interval Tyr39–Phe324. Residues Leu45–Val53 and Lys68 contribute to the ATP site. Asp156 serves as the catalytic Proton acceptor. Phosphothreonine; by CDK1 is present on residues Thr344 and Thr360. Phosphoserine; by CDK1 is present on residues Ser362 and Ser370.

It belongs to the protein kinase superfamily. Ser/Thr protein kinase family. CK2 subfamily. As to quaternary structure, heterotetramer composed of two catalytic subunits (alpha chain and/or alpha' chain) and two regulatory subunits (beta chains). The tetramer can exist as a combination of 2 alpha/2 beta, 2 alpha'/2 beta or 1 alpha/1 alpha'/2 beta subunits. Also part of a CK2-SPT16-SSRP1 complex composed of SSRP1, SUPT16H, CSNK2A1, CSNK2A2 and CSNK2B, which forms following UV irradiation. Interacts with RNPS1. Interacts with SNAI1. Interacts with PML. Interacts with CCAR2. Interacts with HIRIP3. Phosphorylated at Thr-344, Thr-360, Ser-362 and Ser-370 by CDK1 in prophase and metaphase and dephosphorylated during anaphase. Phosphorylation does not directly affect casein kinase 2 activity, but may contribute to its regulation by forming binding sites for interacting proteins and/or targeting it to different compartments.

The protein resides in the nucleus. It carries out the reaction L-seryl-[protein] + ATP = O-phospho-L-seryl-[protein] + ADP + H(+). The catalysed reaction is L-threonyl-[protein] + ATP = O-phospho-L-threonyl-[protein] + ADP + H(+). Constitutively active protein kinase whose activity is not directly affected by phosphorylation. Seems to be regulated by level of expression and localization. In terms of biological role, catalytic subunit of a constitutively active serine/threonine-protein kinase complex that phosphorylates a large number of substrates containing acidic residues C-terminal to the phosphorylated serine or threonine. Regulates numerous cellular processes, such as cell cycle progression, apoptosis and transcription, as well as viral infection. May act as a regulatory node which integrates and coordinates numerous signals leading to an appropriate cellular response. During mitosis, functions as a component of the p53/TP53-dependent spindle assembly checkpoint (SAC) that maintains cyclin-B-CDK1 activity and G2 arrest in response to spindle damage. Also required for p53/TP53-mediated apoptosis, phosphorylating 'Ser-392' of p53/TP53 following UV irradiation. Phosphorylates a number of DNA repair proteins in response to DNA damage, such as MDC1, MRE11, RAD9A, RAD51 and HTATSF1, promoting their recruitment to DNA damage sites. Can also negatively regulate apoptosis. Phosphorylates the caspases CASP9 and CASP2 and the apoptotic regulator NOL3. Phosphorylation protects CASP9 from cleavage and activation by CASP8, and inhibits the dimerization of CASP2 and activation of CASP8. Phosphorylates YY1, protecting YY1 from cleavage by CASP7 during apoptosis. Regulates transcription by direct phosphorylation of RNA polymerases I, II, III and IV. Also phosphorylates and regulates numerous transcription factors including NF-kappa-B, STAT1, CREB1, IRF1, IRF2, ATF1, ATF4, SRF, MAX, JUN, FOS, MYC and MYB. Phosphorylates Hsp90 and its co-chaperones FKBP4 and CDC37, which is essential for chaperone function. Mediates sequential phosphorylation of FNIP1, promoting its gradual interaction with Hsp90, leading to activate both kinase and non-kinase client proteins of Hsp90. Regulates Wnt signaling by phosphorylating CTNNB1 and the transcription factor LEF1. Acts as an ectokinase that phosphorylates several extracellular proteins. Phosphorylates PML at 'Ser-565' and primes it for ubiquitin-mediated degradation. Plays an important role in the circadian clock function by phosphorylating BMAL1 at 'Ser-90' which is pivotal for its interaction with CLOCK and which controls CLOCK nuclear entry. Phosphorylates FMR1, promoting FMR1-dependent formation of a membraneless compartment. May phosphorylate histone H2A on 'Ser-1'. This is Casein kinase II subunit alpha (CSNK2A1) from Oryctolagus cuniculus (Rabbit).